We begin with the raw amino-acid sequence, 155 residues long: Small ribosomal subunit protein uS7c (155 aa).

Belongs to the universal ribosomal protein uS7 family. As to quaternary structure, part of the 30S ribosomal subunit.

It localises to the plastid. The protein resides in the chloroplast. Its function is as follows. One of the primary rRNA binding proteins, it binds directly to 16S rRNA where it nucleates assembly of the head domain of the 30S subunit. This is Small ribosomal subunit protein uS7c (rps7) from Euonymus alatus (Burning bush).